We begin with the raw amino-acid sequence, 634 residues long: Chaperone protein DnaK (634 aa).

Residue Thr199 is modified to Phosphothreonine; by autocatalysis. Residues 601-618 show a composition bias toward low complexity; the sequence is AAAGQAQAESGAGAQGNA. The interval 601–634 is disordered; that stretch reads AAAGQAQAESGAGAQGNAKPDDVVDAEFEEVDKK. The span at 623–634 shows a compositional bias: acidic residues; it reads VVDAEFEEVDKK.

Belongs to the heat shock protein 70 family.

Its function is as follows. Acts as a chaperone. In Acidithiobacillus ferrooxidans (strain ATCC 23270 / DSM 14882 / CIP 104768 / NCIMB 8455) (Ferrobacillus ferrooxidans (strain ATCC 23270)), this protein is Chaperone protein DnaK.